A 728-amino-acid polypeptide reads, in one-letter code: Cellulose synthase-like protein E6 (728 aa).

A run of 2 helical transmembrane segments spans residues 21 to 43 and 53 to 73; these read AVYR…YRAT and AAWL…VITQ. Active-site residues include Asp141 and Asp446. 5 helical membrane passes run 523 to 543, 546 to 566, 646 to 666, 669 to 689, and 707 to 727; these read LWAA…LGLV, TPLF…VFCV, PEFV…VAGL, IMAG…LIVI, and IPLP…LLPI.

It belongs to the glycosyltransferase 2 family. Plant cellulose synthase-like E subfamily.

Its subcellular location is the golgi apparatus membrane. Functionally, thought to be a Golgi-localized beta-glycan synthase that polymerize the backbones of noncellulosic polysaccharides (hemicelluloses) of plant cell wall. This chain is Cellulose synthase-like protein E6 (CSLE6), found in Oryza sativa subsp. japonica (Rice).